Here is a 373-residue protein sequence, read N- to C-terminus: Histidinol-phosphate aminotransferase (373 aa).

An N6-(pyridoxal phosphate)lysine modification is found at Lys229.

Belongs to the class-II pyridoxal-phosphate-dependent aminotransferase family. Histidinol-phosphate aminotransferase subfamily. Requires pyridoxal 5'-phosphate as cofactor.

The enzyme catalyses L-histidinol phosphate + 2-oxoglutarate = 3-(imidazol-4-yl)-2-oxopropyl phosphate + L-glutamate. It functions in the pathway amino-acid biosynthesis; L-histidine biosynthesis; L-histidine from 5-phospho-alpha-D-ribose 1-diphosphate: step 7/9. The sequence is that of Histidinol-phosphate aminotransferase (hisC) from Methanothermobacter thermautotrophicus (strain ATCC 29096 / DSM 1053 / JCM 10044 / NBRC 100330 / Delta H) (Methanobacterium thermoautotrophicum).